A 294-amino-acid chain; its full sequence is 2-methoxy-6-polyprenyl-1,4-benzoquinol methylase, mitochondrial (294 aa).

The transit peptide at 1–10 (MALRSAAGRL) directs the protein to the mitochondrion. Residues Thr100, Asp136, and 166–167 (DA) contribute to the S-adenosyl-L-methionine site.

The protein belongs to the class I-like SAM-binding methyltransferase superfamily. MenG/UbiE family. Component of a multi-subunit COQ enzyme complex.

It localises to the mitochondrion inner membrane. The catalysed reaction is a 2-methoxy-6-(all-trans-polyprenyl)benzene-1,4-diol + S-adenosyl-L-methionine = a 5-methoxy-2-methyl-3-(all-trans-polyprenyl)benzene-1,4-diol + S-adenosyl-L-homocysteine + H(+). It participates in cofactor biosynthesis; ubiquinone biosynthesis. In terms of biological role, methyltransferase required for the conversion of 2-polyprenyl-6-methoxy-1,4-benzoquinol (DDMQH2) to 2-polyprenyl-3-methyl-6-methoxy-1,4-benzoquinol (DMQH2). In Oryza sativa subsp. japonica (Rice), this protein is 2-methoxy-6-polyprenyl-1,4-benzoquinol methylase, mitochondrial.